Here is a 196-residue protein sequence, read N- to C-terminus: CASP-like protein 2A2 (196 aa).

Over 1–26 the chain is Cytoplasmic; sequence MAQGKESVSVVEMEGSGNGPAVEMRH. Residues 27-47 traverse the membrane as a helical segment; sequence FETLFRLLPVGLCISALVLML. Residues 48 to 68 are Extracellular-facing; it reads KSEQSDQYMQLDYSNVDAFRC. Residues 69 to 89 traverse the membrane as a helical segment; it reads LAYANGICAGYSLISAFDSMV. Residues 90–98 lie on the Cytoplasmic side of the membrane; it reads PVSHHISRS. The helical transmembrane segment at 99 to 119 threads the bilayer; the sequence is WILFLLDQGITYLMLAGGAVA. The Extracellular portion of the chain corresponds to 120–148; it reads TQVLYVAYKGDEKATWEQICGSYGRFCNR. Residues 149–169 traverse the membrane as a helical segment; it reads AGASVIISFFALVCFLLLSLL. Topologically, residues 170 to 196 are cytoplasmic; it reads SAYRLFSKYDPPIHGGAKLEDQTTAQI.

It belongs to the Casparian strip membrane proteins (CASP) family. In terms of assembly, homodimer and heterodimers.

The protein localises to the cell membrane. This chain is CASP-like protein 2A2, found in Picea sitchensis (Sitka spruce).